We begin with the raw amino-acid sequence, 158 residues long: NADH-quinone oxidoreductase subunit B 1 (158 aa).

Cysteine 37, cysteine 38, cysteine 102, and cysteine 132 together coordinate [4Fe-4S] cluster.

Belongs to the complex I 20 kDa subunit family. As to quaternary structure, NDH-1 is composed of 14 different subunits. Subunits NuoB, C, D, E, F, and G constitute the peripheral sector of the complex. It depends on [4Fe-4S] cluster as a cofactor.

It localises to the cell inner membrane. It carries out the reaction a quinone + NADH + 5 H(+)(in) = a quinol + NAD(+) + 4 H(+)(out). In terms of biological role, NDH-1 shuttles electrons from NADH, via FMN and iron-sulfur (Fe-S) centers, to quinones in the respiratory chain. Couples the redox reaction to proton translocation (for every two electrons transferred, four hydrogen ions are translocated across the cytoplasmic membrane), and thus conserves the redox energy in a proton gradient. The sequence is that of NADH-quinone oxidoreductase subunit B 1 from Azoarcus sp. (strain BH72).